Here is a 354-residue protein sequence, read N- to C-terminus: Selenide, water dikinase (354 aa).

Residue Cys-23 is part of the active site. ATP is bound by residues Lys-26 and 54–56; that span reads TAD. Position 57 (Asp-57) interacts with Mg(2+). Residues Asp-74, Asp-97, and 145–147 contribute to the ATP site; that span reads GHS. Asp-97 provides a ligand contact to Mg(2+). Asp-233 is a binding site for Mg(2+).

The protein belongs to the selenophosphate synthase 1 family. Class I subfamily. Homodimer. Mg(2+) serves as cofactor.

It catalyses the reaction hydrogenselenide + ATP + H2O = selenophosphate + AMP + phosphate + 2 H(+). Its function is as follows. Synthesizes selenophosphate from selenide and ATP. This chain is Selenide, water dikinase, found in Paraburkholderia xenovorans (strain LB400).